A 102-amino-acid chain; its full sequence is Small ribosomal subunit protein uS10 (102 aa).

This sequence belongs to the universal ribosomal protein uS10 family. In terms of assembly, part of the 30S ribosomal subunit.

Functionally, involved in the binding of tRNA to the ribosomes. The polypeptide is Small ribosomal subunit protein uS10 (Leptospira borgpetersenii serovar Hardjo-bovis (strain JB197)).